The sequence spans 402 residues: uncharacterized protein (402 aa).

It belongs to the peptidase M20 family.

This is an uncharacterized protein from Sinorhizobium fredii (strain NBRC 101917 / NGR234).